A 247-amino-acid polypeptide reads, in one-letter code: 1-(5-phosphoribosyl)-5-[(5-phosphoribosylamino)methylideneamino] imidazole-4-carboxamide isomerase (247 aa).

The Proton acceptor role is filled by Asp-8. Asp-131 serves as the catalytic Proton donor.

This sequence belongs to the HisA/HisF family.

The protein resides in the cytoplasm. The enzyme catalyses 1-(5-phospho-beta-D-ribosyl)-5-[(5-phospho-beta-D-ribosylamino)methylideneamino]imidazole-4-carboxamide = 5-[(5-phospho-1-deoxy-D-ribulos-1-ylimino)methylamino]-1-(5-phospho-beta-D-ribosyl)imidazole-4-carboxamide. The protein operates within amino-acid biosynthesis; L-histidine biosynthesis; L-histidine from 5-phospho-alpha-D-ribose 1-diphosphate: step 4/9. This Methylobacillus flagellatus (strain ATCC 51484 / DSM 6875 / VKM B-1610 / KT) protein is 1-(5-phosphoribosyl)-5-[(5-phosphoribosylamino)methylideneamino] imidazole-4-carboxamide isomerase.